A 312-amino-acid chain; its full sequence is Olfactory receptor 4F15 (312 aa).

Residues methionine 1–leucine 25 lie on the Extracellular side of the membrane. A glycan (N-linked (GlcNAc...) asparagine) is linked at asparagine 5. A helical membrane pass occupies residues leucine 26 to valine 49. Topologically, residues threonine 50 to serine 57 are cytoplasmic. The helical transmembrane segment at proline 58–proline 79 threads the bilayer. The Extracellular segment spans residues lysine 80–glutamine 100. Residues cysteine 97 and cysteine 189 are joined by a disulfide bond. Residues isoleucine 101–phenylalanine 120 form a helical membrane-spanning segment. Residues aspartate 121–arginine 139 lie on the Cytoplasmic side of the membrane. A helical membrane pass occupies residues methionine 140–valine 158. Residues glutamine 159–leucine 195 lie on the Extracellular side of the membrane. Residues glutamate 196–isoleucine 219 form a helical membrane-spanning segment. The Cytoplasmic segment spans residues phenylalanine 220–lysine 235. The helical transmembrane segment at alanine 236–tyrosine 258 threads the bilayer. Topologically, residues threonine 259–lysine 269 are extracellular. Residues tyrosine 270–phenylalanine 289 form a helical membrane-spanning segment. Residues arginine 290–leucine 312 lie on the Cytoplasmic side of the membrane.

This sequence belongs to the G-protein coupled receptor 1 family.

Its subcellular location is the cell membrane. Functionally, odorant receptor. This Homo sapiens (Human) protein is Olfactory receptor 4F15 (OR4F15).